A 281-amino-acid chain; its full sequence is Pantothenate synthetase (281 aa).

Residue M29 to H36 participates in ATP binding. H36 (proton donor) is an active-site residue. Position 60 (Q60) interacts with (R)-pantoate. Q60 serves as a coordination point for beta-alanine. Residue G146–D149 coordinates ATP. Q152 serves as a coordination point for (R)-pantoate. ATP contacts are provided by residues V175 and M183–R186.

The protein belongs to the pantothenate synthetase family. As to quaternary structure, homodimer.

It is found in the cytoplasm. The catalysed reaction is (R)-pantoate + beta-alanine + ATP = (R)-pantothenate + AMP + diphosphate + H(+). The protein operates within cofactor biosynthesis; (R)-pantothenate biosynthesis; (R)-pantothenate from (R)-pantoate and beta-alanine: step 1/1. Catalyzes the condensation of pantoate with beta-alanine in an ATP-dependent reaction via a pantoyl-adenylate intermediate. In Pseudothermotoga lettingae (strain ATCC BAA-301 / DSM 14385 / NBRC 107922 / TMO) (Thermotoga lettingae), this protein is Pantothenate synthetase.